A 186-amino-acid chain; its full sequence is Casparian strip membrane protein 3 (186 aa).

The Cytoplasmic segment spans residues 1 to 26 (MKGSSEHGETSKAAPLGRGGVSKGVS). Residues 27–47 (VLDLILRFIAIIGTLASAIAM) traverse the membrane as a helical segment. The Extracellular segment spans residues 48–74 (GTTNETLPFFTQFIRFKAQYSDLPTLT). N-linked (GlcNAc...) asparagine glycosylation is present at Asn51. A helical transmembrane segment spans residues 75–95 (FFVVANSIVCAYLILSLPLSI). Residues 96–107 (VHIIRSRAKYSR) lie on the Cytoplasmic side of the membrane. Residues 108-128 (LLLIFLDAAMLALVTAGASAA) form a helical membrane-spanning segment. At 129-161 (AAIVYLAHKGNVRANWLAICQQFDSFCERISGS) the chain is on the extracellular side. Residues 162-182 (LIGSFGAMVMLILLILLSAIA) traverse the membrane as a helical segment. Residues 183–186 (LARR) are Cytoplasmic-facing.

Belongs to the Casparian strip membrane proteins (CASP) family. In terms of assembly, homodimer and heterodimers.

Its subcellular location is the cell membrane. Functionally, regulates membrane-cell wall junctions and localized cell wall deposition. Required for establishment of the Casparian strip membrane domain (CSD) and the subsequent formation of Casparian strips, a cell wall modification of the root endodermis that determines an apoplastic barrier between the intraorganismal apoplasm and the extraorganismal apoplasm and prevents lateral diffusion. This is Casparian strip membrane protein 3 from Sorghum bicolor (Sorghum).